Consider the following 180-residue polypeptide: Adenine phosphoribosyltransferase (180 aa).

This sequence belongs to the purine/pyrimidine phosphoribosyltransferase family. Homodimer.

The protein resides in the cytoplasm. It carries out the reaction AMP + diphosphate = 5-phospho-alpha-D-ribose 1-diphosphate + adenine. The protein operates within purine metabolism; AMP biosynthesis via salvage pathway; AMP from adenine: step 1/1. Its function is as follows. Catalyzes a salvage reaction resulting in the formation of AMP, that is energically less costly than de novo synthesis. This Pasteurella multocida (strain Pm70) protein is Adenine phosphoribosyltransferase.